We begin with the raw amino-acid sequence, 401 residues long: Probable E3 ubiquitin-protein ligase RHC2A (401 aa).

The tract at residues 41-93 is disordered; it reads TPSDSFTTTTTTQHRSPTRFPPPSSSSSTPSASMHADNSPTPTIVTRTRSNRS. Over residues 76 to 93 the composition is skewed to polar residues; it reads ADNSPTPTIVTRTRSNRS. The RING-type; atypical zinc-finger motif lies at 201–242; sequence CAVCKENFVLKSSAREMPCNHIYHPDCILPWLAIRNSCPVCR.

It carries out the reaction S-ubiquitinyl-[E2 ubiquitin-conjugating enzyme]-L-cysteine + [acceptor protein]-L-lysine = [E2 ubiquitin-conjugating enzyme]-L-cysteine + N(6)-ubiquitinyl-[acceptor protein]-L-lysine.. Its pathway is protein modification; protein ubiquitination. Probable E3 ubiquitin-protein ligase that may possess E3 ubiquitin ligase activity in vitro. The chain is Probable E3 ubiquitin-protein ligase RHC2A from Arabidopsis thaliana (Mouse-ear cress).